Here is a 288-residue protein sequence, read N- to C-terminus: 4-diphosphocytidyl-2-C-methyl-D-erythritol kinase (288 aa).

Lys19 is an active-site residue. 102–112 (PMGGGIGGGSS) serves as a coordination point for ATP. Asp144 is a catalytic residue.

Belongs to the GHMP kinase family. IspE subfamily.

It catalyses the reaction 4-CDP-2-C-methyl-D-erythritol + ATP = 4-CDP-2-C-methyl-D-erythritol 2-phosphate + ADP + H(+). It participates in isoprenoid biosynthesis; isopentenyl diphosphate biosynthesis via DXP pathway; isopentenyl diphosphate from 1-deoxy-D-xylulose 5-phosphate: step 3/6. Its function is as follows. Catalyzes the phosphorylation of the position 2 hydroxy group of 4-diphosphocytidyl-2C-methyl-D-erythritol. The sequence is that of 4-diphosphocytidyl-2-C-methyl-D-erythritol kinase from Pseudomonas savastanoi pv. phaseolicola (strain 1448A / Race 6) (Pseudomonas syringae pv. phaseolicola (strain 1448A / Race 6)).